The primary structure comprises 616 residues: Chaperone protein HscA (616 aa).

The protein belongs to the heat shock protein 70 family.

Functionally, chaperone involved in the maturation of iron-sulfur cluster-containing proteins. Has a low intrinsic ATPase activity which is markedly stimulated by HscB. Involved in the maturation of IscU. In Escherichia coli O139:H28 (strain E24377A / ETEC), this protein is Chaperone protein HscA.